We begin with the raw amino-acid sequence, 437 residues long: GTPase Obg (437 aa).

The Obg domain occupies 2–160; it reads SLFLDTARIE…KILLLELRVL (159 aa). Residues 161–338 form the OBG-type G domain; it reads ADVGLVGFPS…LLARTSELLA (178 aa). GTP contacts are provided by residues 167-174, 192-196, 214-217, 284-287, and 319-321; these read GFPSVGKS, FTTIT, DMPG, NKMD, and SGL. Mg(2+) is bound by residues Ser-174 and Thr-194. Positions 359-437 constitute an OCT domain; that stretch reads GFEEEEKPFK…IQKFEFEFVD (79 aa).

The protein belongs to the TRAFAC class OBG-HflX-like GTPase superfamily. OBG GTPase family. Monomer. The cofactor is Mg(2+).

It localises to the cytoplasm. Its function is as follows. An essential GTPase which binds GTP, GDP and possibly (p)ppGpp with moderate affinity, with high nucleotide exchange rates and a fairly low GTP hydrolysis rate. Plays a role in control of the cell cycle, stress response, ribosome biogenesis and in those bacteria that undergo differentiation, in morphogenesis control. This Lactococcus lactis subsp. lactis (strain IL1403) (Streptococcus lactis) protein is GTPase Obg.